The primary structure comprises 43 residues: RCKESKPGKNGCRGIDDKHWNSQCKTSQTYVRALSKENNKYVG.

Belongs to the NGF-beta family.

The protein resides in the secreted. Its function is as follows. Seems to promote the survival of visceral and proprioceptive sensory neurons. This is Neurotrophin-3 (ntf3) from Raja clavata (Thornback ray).